A 286-amino-acid polypeptide reads, in one-letter code: MHTRKAITEAIRKLGVQTGDLLMVHASLKAIGPVEGGAETVVAALRSAVGPTGTVMGYASWDRSPYEETLNGARLDDKARRTWPPFDPATAGTYRGFGLLNQFLVQAPGARRSAHPDASMVAVGPLAETLTEPHELGHALGEGSPVERFVRLGGKALLLGAPLNSVTALHYAEAVADIPNKRWVTYEMPMLGRNGEVAWKTASEYDSNGILDCFAIEGKPDAVETIANAYVKLGRHREGVVGFAQCYLFDAQDIVTFGVTYLEKHFGATPIVPAHEAAQRSCEPSG.

This sequence belongs to the antibiotic N-acetyltransferase family.

It catalyses the reaction a 2-deoxystreptamine antibiotic + acetyl-CoA = an N(3)-acetyl-2-deoxystreptamine antibiotic + CoA + H(+). Resistance to antibiotics containing the 2-deoxy-streptamine ring including gentamicin, kanamycin, tobramycin, neomycin and apramycin. The polypeptide is Aminoglycoside N(3)-acetyltransferase III (aacC3) (Salmonella sp).